We begin with the raw amino-acid sequence, 274 residues long: Leucyl/phenylalanyl-tRNA--protein transferase (274 aa).

This sequence belongs to the L/F-transferase family.

The protein resides in the cytoplasm. The enzyme catalyses N-terminal L-lysyl-[protein] + L-leucyl-tRNA(Leu) = N-terminal L-leucyl-L-lysyl-[protein] + tRNA(Leu) + H(+). It catalyses the reaction N-terminal L-arginyl-[protein] + L-leucyl-tRNA(Leu) = N-terminal L-leucyl-L-arginyl-[protein] + tRNA(Leu) + H(+). It carries out the reaction L-phenylalanyl-tRNA(Phe) + an N-terminal L-alpha-aminoacyl-[protein] = an N-terminal L-phenylalanyl-L-alpha-aminoacyl-[protein] + tRNA(Phe). Its function is as follows. Functions in the N-end rule pathway of protein degradation where it conjugates Leu, Phe and, less efficiently, Met from aminoacyl-tRNAs to the N-termini of proteins containing an N-terminal arginine or lysine. The chain is Leucyl/phenylalanyl-tRNA--protein transferase from Psychrobacter cryohalolentis (strain ATCC BAA-1226 / DSM 17306 / VKM B-2378 / K5).